The primary structure comprises 307 residues: Dihydroorotate dehydrogenase A (fumarate) (307 aa).

FMN-binding positions include Ser-21 and 46–47; that span reads KT. Residues Lys-46, 70–74, and Asn-130 contribute to the substrate site; that span reads NSVGL. Asn-130 lines the FMN pocket. Cys-133 serves as the catalytic Nucleophile. Residues Lys-168 and Ile-194 each contribute to the FMN site. 195-196 is a binding site for substrate; the sequence is NT. Residues Gly-220, 246-247, and 268-269 contribute to the FMN site; these read GG and GS.

Belongs to the dihydroorotate dehydrogenase family. Type 1 subfamily. In terms of assembly, homodimer. FMN serves as cofactor.

The protein localises to the cytoplasm. It carries out the reaction (S)-dihydroorotate + fumarate = orotate + succinate. Its pathway is pyrimidine metabolism; UMP biosynthesis via de novo pathway. Functionally, catalyzes the conversion of dihydroorotate to orotate with fumarate as the electron acceptor. This chain is Dihydroorotate dehydrogenase A (fumarate) (pyrD), found in Lactobacillus delbrueckii subsp. bulgaricus (strain ATCC BAA-365 / Lb-18).